A 175-amino-acid polypeptide reads, in one-letter code: ATP synthase subunit delta (175 aa).

This sequence belongs to the ATPase delta chain family. In terms of assembly, F-type ATPases have 2 components, F(1) - the catalytic core - and F(0) - the membrane proton channel. F(1) has five subunits: alpha(3), beta(3), gamma(1), delta(1), epsilon(1). F(0) has three main subunits: a(1), b(2) and c(10-14). The alpha and beta chains form an alternating ring which encloses part of the gamma chain. F(1) is attached to F(0) by a central stalk formed by the gamma and epsilon chains, while a peripheral stalk is formed by the delta and b chains.

It localises to the cell membrane. Its function is as follows. F(1)F(0) ATP synthase produces ATP from ADP in the presence of a proton or sodium gradient. F-type ATPases consist of two structural domains, F(1) containing the extramembraneous catalytic core and F(0) containing the membrane proton channel, linked together by a central stalk and a peripheral stalk. During catalysis, ATP synthesis in the catalytic domain of F(1) is coupled via a rotary mechanism of the central stalk subunits to proton translocation. This protein is part of the stalk that links CF(0) to CF(1). It either transmits conformational changes from CF(0) to CF(1) or is implicated in proton conduction. This chain is ATP synthase subunit delta, found in Lactococcus lactis subsp. lactis (strain IL1403) (Streptococcus lactis).